The following is a 269-amino-acid chain: Tryptophan synthase alpha chain (269 aa).

Active-site proton acceptor residues include Glu49 and Asp60.

It belongs to the TrpA family. As to quaternary structure, tetramer of two alpha and two beta chains.

The catalysed reaction is (1S,2R)-1-C-(indol-3-yl)glycerol 3-phosphate + L-serine = D-glyceraldehyde 3-phosphate + L-tryptophan + H2O. It participates in amino-acid biosynthesis; L-tryptophan biosynthesis; L-tryptophan from chorismate: step 5/5. In terms of biological role, the alpha subunit is responsible for the aldol cleavage of indoleglycerol phosphate to indole and glyceraldehyde 3-phosphate. The polypeptide is Tryptophan synthase alpha chain (Buchnera aphidicola subsp. Acyrthosiphon pisum (strain APS) (Acyrthosiphon pisum symbiotic bacterium)).